The primary structure comprises 38 residues: MIEPLLCGIVLGLIPVTLLGLFVDAWNQYRRDTVLGDW.

A helical membrane pass occupies residues 5–25 (LLCGIVLGLIPVTLLGLFVDA).

The protein belongs to the PetG family. The 4 large subunits of the cytochrome b6-f complex are cytochrome b6, subunit IV (17 kDa polypeptide, PetD), cytochrome f and the Rieske protein, while the 4 small subunits are PetG, PetL, PetM and PetN. The complex functions as a dimer.

The protein resides in the cellular thylakoid membrane. Component of the cytochrome b6-f complex, which mediates electron transfer between photosystem II (PSII) and photosystem I (PSI), cyclic electron flow around PSI, and state transitions. PetG is required for either the stability or assembly of the cytochrome b6-f complex. The protein is Cytochrome b6-f complex subunit 5 of Prochlorococcus marinus (strain MIT 9313).